The primary structure comprises 38 residues: Large ribosomal subunit protein bL36 (38 aa).

The protein belongs to the bacterial ribosomal protein bL36 family.

This is Large ribosomal subunit protein bL36 from Buchnera aphidicola subsp. Schizaphis graminum (strain Sg).